The primary structure comprises 339 residues: Probable G-protein coupled receptor 33 (339 aa).

The Extracellular segment spans residues 1-30 (MDLINSSTHVINVSTSLTNSTGVPTPAPKT). N-linked (GlcNAc...) asparagine glycosylation is found at Asn-5, Asn-12, and Asn-19. The chain crosses the membrane as a helical span at residues 31–53 (IIAASLFMAFIIGVISNGLYLWM). Over 54–64 (LQFKMQRTVNT) the chain is Cytoplasmic. Residues 65–86 (LLFFHLILSYFISTLILPFMAT) form a helical membrane-spanning segment. The Extracellular segment spans residues 87–103 (SFLQDNHWVFGSVLCKA). The cysteines at positions 101 and 179 are disulfide-linked. Residues 104–124 (FNSTLSVSMFASVFFLSAISV) form a helical membrane-spanning segment. The Cytoplasmic segment spans residues 125–143 (ARYYLILHPVWSQQHRTPH). A helical membrane pass occupies residues 144 to 165 (WASRIALQIWISATILSIPYLV). Residues 166-209 (FRTTHDDHKGRIKCQNNYIVSTDWESKEHQTLGQWIHAACFVGR) lie on the Extracellular side of the membrane. Residues 210–230 (FLLGFLLPFLVIIFCYKRVAT) form a helical membrane-spanning segment. The Cytoplasmic portion of the chain corresponds to 231-246 (KMKEKGLFKSSKPFKV). The helical transmembrane segment at 247–268 (MVTAVISFFVCWMPYHVHSGLV) threads the bilayer. Over 269–283 (LTKSQPLPLHLTLGL) the chain is Extracellular. The helical transmembrane segment at 284-303 (AVVTISFNTVVSPVLYLFTG) threads the bilayer. Residues 304-339 (ENFKVFKKSILALFNSTFSDISSTERTQTLNSETEI) are Cytoplasmic-facing.

This sequence belongs to the G-protein coupled receptor 1 family. In terms of tissue distribution, expressed predominantly in lung, spleen and testis.

The protein resides in the cell membrane. Its function is as follows. Orphan receptor; could be a chemoattractant receptor. This chain is Probable G-protein coupled receptor 33 (Gpr33), found in Mus musculus (Mouse).